A 470-amino-acid polypeptide reads, in one-letter code: MAQMTSGLYPMFGFFICLLFLPASWEAGANTFQELQKTGEPSIFDHLLPLTPGLTRRALSDHKNSGQHPPDLPKSTATQKPKRQCNTVRLVKPVHKPIDDAKAADYGNTTVGHEPFPASEKNLSSQGKHPMARNERSADDHGSTNSEKRSDGGHSTSAPMRKISCKPVTRTSGTPVSSTETSTKLRTTSQKPETSSHDSDLIRKSTSLPVKSTEVSRTSYRTPRSLGAERHTIPFTSDKSIQLTIEHTKEATRSQSTPTKYERETRSASERISRAHVPPVENHTPSAGETTTQVSAKSTKHTEEATTSTTEKATKAPERPTVNLNTTGLVKAMENTSTAPSPHLHKTETAHQGITGSLTSRMDLRPITSEAHHLQQNTHSLPGGLHSVQEREGSNSFPAWAIVVVILMAVIILLIFLGLIFLVSCASRARHQLTQNSEDAEPEDKGGRNSYPVYLMEQQNLNLNQISSPP.

A signal peptide spans 1-29 (MAQMTSGLYPMFGFFICLLFLPASWEAGA). At 30 to 401 (NTFQELQKTG…EGSNSFPAWA (372 aa)) the chain is on the extracellular side. Disordered stretches follow at residues 57–234 (RALS…HTIP) and 248–318 (TKEA…KAPE). Polar residues predominate over residues 75 to 87 (STATQKPKRQCNT). N122 carries N-linked (GlcNAc...) asparagine glycosylation. The segment covering 132–152 (ARNERSADDHGSTNSEKRSDG) has biased composition (basic and acidic residues). Residues 169–193 (TRTSGTPVSSTETSTKLRTTSQKPE) show a composition bias toward polar residues. The span at 194 to 203 (TSSHDSDLIR) shows a compositional bias: basic and acidic residues. Positions 204–222 (KSTSLPVKSTEVSRTSYRT) are enriched in polar residues. Residues 260–273 (KYERETRSASERIS) are compositionally biased toward basic and acidic residues. The segment covering 283–295 (HTPSAGETTTQVS) has biased composition (polar residues). N-linked (GlcNAc...) asparagine glycosylation occurs at N325. Residues 402–422 (IVVVILMAVIILLIFLGLIFL) form a helical membrane-spanning segment. The Cytoplasmic segment spans residues 423 to 470 (VSCASRARHQLTQNSEDAEPEDKGGRNSYPVYLMEQQNLNLNQISSPP).

The protein localises to the cell membrane. It is found in the cytoplasm. Its function is as follows. May modulate NF-kappaB signaling and play a role in cell growth. This is Mucin-like protein 3 from Rattus norvegicus (Rat).